A 167-amino-acid chain; its full sequence is Arginine repressor (167 aa).

The protein belongs to the ArgR family.

The protein resides in the cytoplasm. The protein operates within amino-acid biosynthesis; L-arginine biosynthesis [regulation]. Functionally, regulates arginine biosynthesis genes. The sequence is that of Arginine repressor from Mycobacterium leprae (strain Br4923).